The chain runs to 478 residues: Cysteine--tRNA ligase (478 aa).

A Zn(2+)-binding site is contributed by C27. The 'HIGH' region signature appears at 29–39 (PTTYNFIHLGN). Zn(2+) contacts are provided by C207, H232, and E236. Positions 264 to 268 (KMSKS) match the 'KMSKS' region motif. K267 contributes to the ATP binding site.

It belongs to the class-I aminoacyl-tRNA synthetase family. In terms of assembly, monomer. The cofactor is Zn(2+).

The protein localises to the cytoplasm. The catalysed reaction is tRNA(Cys) + L-cysteine + ATP = L-cysteinyl-tRNA(Cys) + AMP + diphosphate. This Desulforudis audaxviator (strain MP104C) protein is Cysteine--tRNA ligase.